A 105-amino-acid polypeptide reads, in one-letter code: Replication initiation control protein YabA (105 aa).

Zn(2+)-binding residues include His79, Cys81, Cys95, and Cys98.

This sequence belongs to the YabA family. As to quaternary structure, homotetramer. Interacts with both DnaA and DnaN, acting as a bridge between these two proteins. Zn(2+) is required as a cofactor.

The protein localises to the cytoplasm. It is found in the nucleoid. Functionally, involved in control of chromosome replication initiation. Inhibits the cooperative binding of DnaA to the oriC region, thus negatively regulating initiation of chromosome replication. Inhibits the ability of DnaA-ATP to form a helix on DNA; does not disassemble preformed DnaA-DNA helices. Decreases the residence time of DnaA on the chromosome at its binding sites (oriC, replication forks and promoter-binding sites). Tethers DnaA to the replication machinery via the DNA polymerase beta sliding clamp subunit (dnaN). Associates with oriC and other DnaA targets on the chromosome in a DnaA-dependent manner. The sequence is that of Replication initiation control protein YabA from Streptococcus suis (strain 98HAH33).